Reading from the N-terminus, the 329-residue chain is Glycerol-3-phosphate dehydrogenase [NAD(P)+] (329 aa).

Residues Trp15, His35, and Lys107 each coordinate NADPH. 3 residues coordinate sn-glycerol 3-phosphate: Lys107, Gly135, and Ser137. Residue Ala139 coordinates NADPH. Residues Lys190, Asp243, Ser253, Arg254, and Asn255 each coordinate sn-glycerol 3-phosphate. The active-site Proton acceptor is Lys190. Arg254 provides a ligand contact to NADPH. NADPH is bound by residues Leu276 and Glu278.

The protein belongs to the NAD-dependent glycerol-3-phosphate dehydrogenase family.

It is found in the cytoplasm. The enzyme catalyses sn-glycerol 3-phosphate + NAD(+) = dihydroxyacetone phosphate + NADH + H(+). It carries out the reaction sn-glycerol 3-phosphate + NADP(+) = dihydroxyacetone phosphate + NADPH + H(+). Its pathway is membrane lipid metabolism; glycerophospholipid metabolism. Catalyzes the reduction of the glycolytic intermediate dihydroxyacetone phosphate (DHAP) to sn-glycerol 3-phosphate (G3P), the key precursor for phospholipid synthesis. The protein is Glycerol-3-phosphate dehydrogenase [NAD(P)+] of Rhodopseudomonas palustris (strain BisB5).